Consider the following 315-residue polypeptide: Transposase for insertion sequence element IS640 (315 aa).

Residues 5 to 66 form the HTH IS21-type domain; it reads EDFYMIKQMR…PFMDYIDMRL (62 aa). The 175-residue stretch at 111–285 folds into the Integrase catalytic domain; it reads FETQPGYQLQ…TPEQRSRWSR (175 aa).

The protein belongs to the transposase IS21/IS408/IS1162 family.

Its function is as follows. Involved in the transposition of the insertion sequence. The protein is Transposase for insertion sequence element IS640 (istA) of Shigella sonnei.